The primary structure comprises 412 residues: Early growth response protein 2b (412 aa).

Residues 269-299 are disordered; that stretch reads YTPQNLPLRPILRPRKYPNRPSKTPVHERPY. 3 consecutive C2H2-type zinc fingers follow at residues 299–323, 329–351, and 357–379; these read YPCP…IRIH, FQCR…IRTH, and FACD…TKIH. Positions 371–412 are disordered; that stretch reads ERKRHTKIHLRQKERKSSSSSTGVSSSERGVATSICSSSSNQ. Positions 374-384 are enriched in basic residues; it reads RHTKIHLRQKE. A compositionally biased stretch (low complexity) spans 388–401; it reads SSSSTGVSSSERGV.

Belongs to the EGR C2H2-type zinc-finger protein family.

The protein resides in the nucleus. In terms of biological role, sequence-specific DNA-binding transcription factor. Binds to two specific DNA sites located in the promoter region of HOXA4. The protein is Early growth response protein 2b (egr2b) of Danio rerio (Zebrafish).